The following is a 145-amino-acid chain: Large ribosomal subunit protein uL15 (145 aa).

Residues 1–57 (MKLNDLSPAPGSRREKHRPGRGIGSGLGKTGGRGHKGQTSRSGGTIAPGFEGGQQPL) form a disordered region. Residues 21-31 (RGIGSGLGKTG) show a composition bias toward gly residues.

This sequence belongs to the universal ribosomal protein uL15 family. As to quaternary structure, part of the 50S ribosomal subunit.

Functionally, binds to the 23S rRNA. This chain is Large ribosomal subunit protein uL15, found in Pseudomonas fluorescens (strain SBW25).